A 237-amino-acid chain; its full sequence is Uridylate kinase (237 aa).

An ATP-binding site is contributed by 11–14 (KLSG). Gly53 provides a ligand contact to UMP. Positions 54 and 58 each coordinate ATP. UMP contacts are provided by residues Asp73 and 134–141 (TGNPFFTT). ATP-binding residues include Thr161, Tyr167, and Asp170.

It belongs to the UMP kinase family. Homohexamer.

It localises to the cytoplasm. The catalysed reaction is UMP + ATP = UDP + ADP. The protein operates within pyrimidine metabolism; CTP biosynthesis via de novo pathway; UDP from UMP (UMPK route): step 1/1. Inhibited by UTP. In terms of biological role, catalyzes the reversible phosphorylation of UMP to UDP. The sequence is that of Uridylate kinase from Nitrosomonas europaea (strain ATCC 19718 / CIP 103999 / KCTC 2705 / NBRC 14298).